The primary structure comprises 260 residues: Indole-3-glycerol phosphate synthase (260 aa).

Belongs to the TrpC family.

The catalysed reaction is 1-(2-carboxyphenylamino)-1-deoxy-D-ribulose 5-phosphate + H(+) = (1S,2R)-1-C-(indol-3-yl)glycerol 3-phosphate + CO2 + H2O. It functions in the pathway amino-acid biosynthesis; L-tryptophan biosynthesis; L-tryptophan from chorismate: step 4/5. The sequence is that of Indole-3-glycerol phosphate synthase from Chloroherpeton thalassium (strain ATCC 35110 / GB-78).